Reading from the N-terminus, the 432-residue chain is UDP-N-acetylmuramate--L-alanine ligase (432 aa).

108–114 (GAHGKTS) contacts ATP.

The protein belongs to the MurCDEF family.

The protein resides in the cytoplasm. It catalyses the reaction UDP-N-acetyl-alpha-D-muramate + L-alanine + ATP = UDP-N-acetyl-alpha-D-muramoyl-L-alanine + ADP + phosphate + H(+). It participates in cell wall biogenesis; peptidoglycan biosynthesis. In terms of biological role, cell wall formation. The sequence is that of UDP-N-acetylmuramate--L-alanine ligase from Bacillus velezensis (strain DSM 23117 / BGSC 10A6 / LMG 26770 / FZB42) (Bacillus amyloliquefaciens subsp. plantarum).